Here is a 541-residue protein sequence, read N- to C-terminus: Tyrosine-protein kinase Yes (541 aa).

The span at M1–K10 shows a compositional bias: basic and acidic residues. Residues M1–A29 are disordered. G2 carries N-myristoyl glycine lipidation. Residue C3 is the site of S-palmitoyl cysteine; in membrane form attachment. Over residues E19–A29 the composition is skewed to polar residues. Residue Y32 is modified to Phosphotyrosine. Positions G89–S150 constitute an SH3 domain. The SH2 domain maps to W156–C253. Residues L275–F528 enclose the Protein kinase domain. Residues L281 to V289 and K303 contribute to the ATP site. Y334 and Y343 each carry phosphotyrosine. D394 (proton acceptor) is an active-site residue. Residue Y424 is modified to Phosphotyrosine; by autocatalysis. The residue at position 535 (Y535) is a Phosphotyrosine.

As to quaternary structure, interacts with YAP1 and CSF1R. Interacts with FASLG. Interacts with CTNND1; this interaction allows YES1-mediated activation of FYN and FER and subsequent phosphorylation of CTNND1. Interacts with IL6ST/gp130. Interacts with SCRIB, when YES1 is in a closed conformation; the interaction facilitates YES1 autophosphorylation. Phosphorylated. Phosphorylation by CSK on the C-terminal tail maintains the enzyme in an inactive state. Autophosphorylation at Tyr-424 maintains enzyme activity by blocking CSK-mediated inhibition. In terms of processing, palmitoylation at Cys-3 promotes membrane localization.

The protein localises to the cell membrane. The protein resides in the cytoplasm. Its subcellular location is the cytoskeleton. It is found in the microtubule organizing center. It localises to the centrosome. The protein localises to the cytosol. The protein resides in the cell junction. The catalysed reaction is L-tyrosyl-[protein] + ATP = O-phospho-L-tyrosyl-[protein] + ADP + H(+). Functionally, non-receptor protein tyrosine kinase that is involved in the regulation of cell growth and survival, apoptosis, cell-cell adhesion, cytoskeleton remodeling, and differentiation. Stimulation by receptor tyrosine kinases (RTKs) including EGFR, PDGFR, CSF1R and FGFR leads to recruitment of YES1 to the phosphorylated receptor, and activation and phosphorylation of downstream substrates. Upon EGFR activation, promotes the phosphorylation of PARD3 to favor epithelial tight junction assembly. Participates in the phosphorylation of specific junctional components such as CTNND1 by stimulating the FYN and FER tyrosine kinases at cell-cell contacts. Upon T-cell stimulation by CXCL12, phosphorylates collapsin response mediator protein 2/DPYSL2 and induces T-cell migration. Participates in CD95L/FASLG signaling pathway and mediates AKT-mediated cell migration. Plays a role in cell cycle progression by phosphorylating the cyclin dependent kinase 4/CDK4 thus regulating the G1 phase. Also involved in G2/M progression and cytokinesis. Catalyzes phosphorylation of organic cation transporter OCT2 which induces its transport activity. In Rattus norvegicus (Rat), this protein is Tyrosine-protein kinase Yes (Yes1).